The sequence spans 248 residues: Ubiquinone/menaquinone biosynthesis C-methyltransferase UbiE (248 aa).

The S-adenosyl-L-methionine site is built by Ser68 and Asp92.

Belongs to the class I-like SAM-binding methyltransferase superfamily. MenG/UbiE family.

The enzyme catalyses a 2-demethylmenaquinol + S-adenosyl-L-methionine = a menaquinol + S-adenosyl-L-homocysteine + H(+). It carries out the reaction a 2-methoxy-6-(all-trans-polyprenyl)benzene-1,4-diol + S-adenosyl-L-methionine = a 5-methoxy-2-methyl-3-(all-trans-polyprenyl)benzene-1,4-diol + S-adenosyl-L-homocysteine + H(+). It participates in quinol/quinone metabolism; menaquinone biosynthesis; menaquinol from 1,4-dihydroxy-2-naphthoate: step 2/2. It functions in the pathway cofactor biosynthesis; ubiquinone biosynthesis. In terms of biological role, methyltransferase required for the conversion of demethylmenaquinol (DMKH2) to menaquinol (MKH2) and the conversion of 2-polyprenyl-6-methoxy-1,4-benzoquinol (DDMQH2) to 2-polyprenyl-3-methyl-6-methoxy-1,4-benzoquinol (DMQH2). The protein is Ubiquinone/menaquinone biosynthesis C-methyltransferase UbiE of Rickettsia felis (strain ATCC VR-1525 / URRWXCal2) (Rickettsia azadi).